A 523-amino-acid polypeptide reads, in one-letter code: Peptide chain release factor 3 (523 aa).

The tr-type G domain occupies 10-277 (NKRRTFAIIS…QFVDLAPAPG (268 aa)). Residues 19-26 (SHPDAGKT), 87-91 (DTPGH), and 141-144 (NKLD) each bind GTP.

The protein belongs to the TRAFAC class translation factor GTPase superfamily. Classic translation factor GTPase family. PrfC subfamily.

It is found in the cytoplasm. Its function is as follows. Increases the formation of ribosomal termination complexes and stimulates activities of RF-1 and RF-2. It binds guanine nucleotides and has strong preference for UGA stop codons. It may interact directly with the ribosome. The stimulation of RF-1 and RF-2 is significantly reduced by GTP and GDP, but not by GMP. This chain is Peptide chain release factor 3, found in Lactobacillus delbrueckii subsp. bulgaricus (strain ATCC BAA-365 / Lb-18).